A 496-amino-acid polypeptide reads, in one-letter code: Solute carrier family 2, facilitated glucose transporter member 3 (496 aa).

The Cytoplasmic segment spans residues 1–11; it reads MADKKKITASL. Residues 12 to 33 traverse the membrane as a helical segment; sequence IYAVSVAAIGSLQFGYNTGVIN. At 34 to 65 the chain is on the extracellular side; sequence APEKIIQAFYNRTLSQRSGETISPELLTSLWS. N-linked (GlcNAc...) asparagine glycosylation occurs at Asn-44. Residues 66-86 traverse the membrane as a helical segment; sequence LSVAIFSVGGMIGSFSVSLFF. Residues 87–91 are Cytoplasmic-facing; it reads NRFGR. Residues 92-112 traverse the membrane as a helical segment; that stretch reads RNSMLLVNVLAFAGGALMALS. The Extracellular portion of the chain corresponds to 113–119; the sequence is KIAKAVE. A helical membrane pass occupies residues 120–143; the sequence is MLIIGRFIIGLFCGLCTGFVPMYI. Over 144 to 154 the chain is Cytoplasmic; sequence SEVSPTSLRGA. A helical membrane pass occupies residues 155-175; the sequence is FGTLNQLGIVVGILVAQIFGL. Gln-160 contacts D-glucose. Topologically, residues 176–184 are extracellular; sequence EGIMGTEAL. The helical transmembrane segment at 185–205 threads the bilayer; that stretch reads WPLLLGFTIVPAVLQCVALLF. Over 206-270 the chain is Cytoplasmic; sequence CPESPRFLLI…LFRSPNYRQP (65 aa). Residues 271–291 form a helical membrane-spanning segment; that stretch reads IIISITLQLSQQLSGINAVFY. The interval 278-280 is important for selectivity against fructose; it reads QLS. D-glucose-binding positions include 281–282 and Asn-287; that span reads QQ. Residues 292–305 are Extracellular-facing; sequence YSTGIFERAGITQP. The chain crosses the membrane as a helical span at residues 306–326; it reads VYATIGAGVVNTVFTVVSLFL. D-glucose is bound at residue Asn-316. Over 327 to 332 the chain is Cytoplasmic; the sequence is VERAGR. Residues 333–353 form a helical membrane-spanning segment; that stretch reads RTLHLVGLGGMAVCAAVMTIA. The Extracellular portion of the chain corresponds to 354-362; the sequence is LALKEKWIR. The chain crosses the membrane as a helical span at residues 363–388; it reads YISIVATFGFVALFEIGPGPIPWFIV. D-glucose-binding residues include Glu-377 and Trp-385. The Cytoplasmic segment spans residues 389–398; the sequence is AELFSQGPRP. Residues 399–419 form a helical membrane-spanning segment; sequence AAMAVAGCSNWTSNFLVGMLF. At 420–428 the chain is on the extracellular side; sequence PYAEKLCGP. The helical transmembrane segment at 429–449 threads the bilayer; the sequence is YVFLIFLVFLLIFFIFTYFKV. The Cytoplasmic segment spans residues 450–496; it reads PETKGRTFEDISRGFEEQVETSSPSSPPIEKNPMVEMNSIEPDKEVA. The segment at 464-496 is disordered; sequence FEEQVETSSPSSPPIEKNPMVEMNSIEPDKEVA.

The protein belongs to the major facilitator superfamily. Sugar transporter (TC 2.A.1.1) family. Glucose transporter subfamily.

The protein resides in the cell membrane. Its subcellular location is the perikaryon. The protein localises to the cell projection. It carries out the reaction D-glucose(out) = D-glucose(in). It catalyses the reaction D-galactose(in) = D-galactose(out). With respect to regulation, deoxyglucose transport is inhibited by D-glucose, D-galactose and maltose. Galactose transport is inhibited by D-glucose and maltose. In terms of biological role, facilitative glucose transporter. Can also mediate the uptake of various other monosaccharides across the cell membrane. Mediates the uptake of glucose, 2-deoxyglucose, galactose, mannose, xylose and fucose, and probably also dehydroascorbate. Does not mediate fructose transport. Required for mesendoderm differentiation. This Gallus gallus (Chicken) protein is Solute carrier family 2, facilitated glucose transporter member 3.